A 104-amino-acid polypeptide reads, in one-letter code: UPF0145 protein VNG_2432C (104 aa).

Belongs to the UPF0145 family.

The chain is UPF0145 protein VNG_2432C from Halobacterium salinarum (strain ATCC 700922 / JCM 11081 / NRC-1) (Halobacterium halobium).